The sequence spans 252 residues: 2-succinyl-6-hydroxy-2,4-cyclohexadiene-1-carboxylate synthase (252 aa).

Belongs to the AB hydrolase superfamily. MenH family. Monomer.

It catalyses the reaction 5-enolpyruvoyl-6-hydroxy-2-succinyl-cyclohex-3-ene-1-carboxylate = (1R,6R)-6-hydroxy-2-succinyl-cyclohexa-2,4-diene-1-carboxylate + pyruvate. It participates in quinol/quinone metabolism; 1,4-dihydroxy-2-naphthoate biosynthesis; 1,4-dihydroxy-2-naphthoate from chorismate: step 3/7. The protein operates within quinol/quinone metabolism; menaquinone biosynthesis. In terms of biological role, catalyzes a proton abstraction reaction that results in 2,5-elimination of pyruvate from 2-succinyl-5-enolpyruvyl-6-hydroxy-3-cyclohexene-1-carboxylate (SEPHCHC) and the formation of 2-succinyl-6-hydroxy-2,4-cyclohexadiene-1-carboxylate (SHCHC). In Escherichia coli (strain UTI89 / UPEC), this protein is 2-succinyl-6-hydroxy-2,4-cyclohexadiene-1-carboxylate synthase.